We begin with the raw amino-acid sequence, 230 residues long: Demethylmenaquinone methyltransferase (230 aa).

S-adenosyl-L-methionine-binding positions include T57, D77, 101–102 (DI), and S118.

It belongs to the class I-like SAM-binding methyltransferase superfamily. MenG/UbiE family.

The enzyme catalyses a 2-demethylmenaquinol + S-adenosyl-L-methionine = a menaquinol + S-adenosyl-L-homocysteine + H(+). It participates in quinol/quinone metabolism; menaquinone biosynthesis; menaquinol from 1,4-dihydroxy-2-naphthoate: step 2/2. Its function is as follows. Methyltransferase required for the conversion of demethylmenaquinol (DMKH2) to menaquinol (MKH2). This is Demethylmenaquinone methyltransferase from Chlamydia felis (strain Fe/C-56) (Chlamydophila felis).